Consider the following 83-residue polypeptide: Acyl carrier protein (83 aa).

Positions 2–77 (STIEEKVKTI…AAIDFISNSH (76 aa)) constitute a Carrier domain. S37 carries the post-translational modification O-(pantetheine 4'-phosphoryl)serine.

This sequence belongs to the acyl carrier protein (ACP) family. 4'-phosphopantetheine is transferred from CoA to a specific serine of apo-ACP by AcpS. This modification is essential for activity because fatty acids are bound in thioester linkage to the sulfhydryl of the prosthetic group.

The protein localises to the cytoplasm. It functions in the pathway lipid metabolism; fatty acid biosynthesis. Its function is as follows. Carrier of the growing fatty acid chain in fatty acid biosynthesis. The polypeptide is Acyl carrier protein (Blochmanniella pennsylvanica (strain BPEN)).